A 323-amino-acid polypeptide reads, in one-letter code: 1D-myo-inositol 2-acetamido-2-deoxy-alpha-D-glucopyranoside deacetylase (323 aa).

Zn(2+) contacts are provided by His28, Asp31, and His163.

Belongs to the MshB deacetylase family. Zn(2+) is required as a cofactor.

It catalyses the reaction 1D-myo-inositol 2-acetamido-2-deoxy-alpha-D-glucopyranoside + H2O = 1D-myo-inositol 2-amino-2-deoxy-alpha-D-glucopyranoside + acetate. Its function is as follows. Catalyzes the deacetylation of 1D-myo-inositol 2-acetamido-2-deoxy-alpha-D-glucopyranoside (GlcNAc-Ins) in the mycothiol biosynthesis pathway. The sequence is that of 1D-myo-inositol 2-acetamido-2-deoxy-alpha-D-glucopyranoside deacetylase from Streptomyces scabiei (strain 87.22).